The sequence spans 105 residues: Guanidinium exporter (105 aa).

The chain crosses the membrane as a helical span at residues 1 to 21; it reads MSWIILVIAGLLEVVWAVGLK. Topologically, residues 22–28 are cytoplasmic; that stretch reads YTHGFSR. The helical transmembrane segment at 29-49 threads the bilayer; it reads LTPSVITVTAMIVSLALLAWA. Topologically, residues 50-57 are periplasmic; the sequence is MKSLPVGT. The helical transmembrane segment at 58-78 threads the bilayer; the sequence is AYAVWTGIGAVGAAITGIVLL. Over 79–81 the chain is Cytoplasmic; that stretch reads GES. A helical membrane pass occupies residues 82-102; the sequence is ANPMRLASLALIVLGIIGLKL. The Periplasmic segment spans residues 103 to 105; the sequence is STH.

Belongs to the drug/metabolite transporter (DMT) superfamily. Small multidrug resistance (SMR) (TC 2.A.7.1) family. Gdx/SugE subfamily.

Its subcellular location is the cell inner membrane. Its function is as follows. Guanidinium ion exporter. Couples guanidinium export to the proton motive force, exchanging one guanidinium ion for two protons. The protein is Guanidinium exporter of Escherichia coli O6:H1 (strain CFT073 / ATCC 700928 / UPEC).